A 1820-amino-acid polypeptide reads, in one-letter code: Sodium channel protein (1820 aa).

The Cytoplasmic segment spans residues 1–117 (MARKFSSARP…FNPIRRGAIR (117 aa)). An I repeat occupies 108–410 (FNPIRRGAIR…VAMAYEEQNQ (303 aa)). The chain crosses the membrane as a helical span at residues 118–138 (VFVNSAFNFFIMFTIFSNCIF). Topologically, residues 139–149 (MTISNPPAWSK) are extracellular. A helical transmembrane segment spans residues 150–171 (IVEYTFTGIYTFEVIVKVLSRG). Residues 172 to 176 (FCIGH) are Cytoplasmic-facing. Residues 177–197 (FTFLRDPWNWLDFSVVTMTYI) traverse the membrane as a helical segment. Residues 198–203 (TEFIDL) lie on the Extracellular side of the membrane. Residues 204 to 224 (RNVSALRTFRVLRALKTITIF) traverse the membrane as a helical; Voltage-sensor segment. Topologically, residues 225–243 (PGLKTIVRALIESMKQMGD) are cytoplasmic. A helical membrane pass occupies residues 244–264 (VVILTVFSLAVFTLAGMQLFM). The Extracellular portion of the chain corresponds to 265-346 (GNLRHKCIRW…PNYGYTNYDN (82 aa)). C271 and C324 form a disulfide bridge. N-linked (GlcNAc...) asparagine glycans are attached at residues N278, N288, and N317. Residues 285–342 (SAYNTTFDFTAYIENEENQYFLDGALDALLCGNNSDAGKCPEGYTCMKAGRNPNYGYT) form a non-homologous region of repeat I region. The pore-forming intramembrane region spans 347-371 (FAWTFLCLFRLMLQDYWENLYQMTL). Over 372–378 (RAAGKSY) the chain is Extracellular. A helical membrane pass occupies residues 379–402 (MVFFIMVIFLGSFYLINLILAVVA). The Cytoplasmic portion of the chain corresponds to 403–557 (MAYEEQNQAT…CCGPWVFLKK (155 aa)). The tract at residues 483–507 (SVKLSTEEQRSDSKSMDSKHSVDKP) is disordered. Basic and acidic residues predominate over residues 487–507 (STEEQRSDSKSMDSKHSVDKP). Residues 548–811 (CCGPWVFLKK…EEDDEVNSLQ (264 aa)) form an II repeat. A helical transmembrane segment spans residues 558–578 (WVHFVMMDPFTDLFITLCIIL). Over 579–599 (NTLFMSIEHHPMNESFQSLLS) the chain is Extracellular. N591 is a glycosylation site (N-linked (GlcNAc...) asparagine). The chain crosses the membrane as a helical span at residues 600–620 (AGNLVFTTIFAAEMVLKIIAL). Residues 621–625 (DPYYY) lie on the Cytoplasmic side of the membrane. A helical membrane pass occupies residues 626–643 (FQQTWNIFDSIIVSLSLL). Topologically, residues 644 to 650 (ELGLSNM) are extracellular. A helical; Voltage-sensor membrane pass occupies residues 651-671 (QGMSVLRSLRLLRIFKLAKSW). Residues 672–690 (PTLNILIKIICNSVGALGN) lie on the Cytoplasmic side of the membrane. A helical membrane pass occupies residues 691 to 711 (LTIVLAIIVFIFALVGFQLFG). The Extracellular segment spans residues 712–734 (KNYKEYVCKISDDCELPRWHMND). Positions 735–755 (FFHSFLIVFRALCGEWIETMW) form an intramembrane region, pore-forming. Topologically, residues 756 to 766 (DCMEVGGVPMC) are extracellular. An intrachain disulfide couples C757 to C766. A helical membrane pass occupies residues 767 to 790 (LAVYMMVIIIGNLVMLNLFLALLL). The Cytoplasmic segment spans residues 791–1004 (SSFSSDNLSS…TIVEHDYFET (214 aa)). Disordered regions lie at residues 844 to 864 (PPSD…DTLP) and 891 to 959 (VKGE…SKDP). A compositionally biased stretch (acidic residues) spans 896–910 (EIEEEGLVDSSDEED). Positions 924–935 (SVCSTVDYSPSE) are enriched in polar residues. The span at 942-953 (EEEEEEEEEPEE) shows a compositional bias: acidic residues. The III repeat unit spans residues 988-1295 (NLRRTCYTIV…KKYYNAMKKL (308 aa)). Residues 1005 to 1025 (FIIFMILLSSGVLAFEDIYIW) form a helical membrane-spanning segment. At 1026-1037 (RRRVIKVILEYA) the chain is on the extracellular side. The chain crosses the membrane as a helical span at residues 1038–1058 (DKVFTYVFIVEMLLKWVAYGF). Residues 1059–1065 (KRYFTDA) are Cytoplasmic-facing. A helical transmembrane segment spans residues 1066-1086 (WCWLDFVIVGASIMGITSSLL). The Extracellular segment spans residues 1087-1091 (GYEEL). The helical; Voltage-sensor transmembrane segment at 1092–1112 (GAIKNLRTIRALRPLRALSRF) threads the bilayer. Residues 1113-1131 (EGMKVVVRALLGAIPSIMN) are Cytoplasmic-facing. A helical membrane pass occupies residues 1132–1152 (VLLVCLMFWLIFSIMGVNLFA). Topologically, residues 1153–1199 (GKFYRCINTTTDEILPVEEVNNRSDCMALMYTNEVRWVNLKVNYDNA) are extracellular. Residues N1160 and N1174 are each glycosylated (N-linked (GlcNAc...) asparagine). The non-homologous region of repeat III stretch occupies residues 1172–1194 (VNNRSDCMALMYTNEVRWVNLKV). Positions 1200 to 1221 (GMGYLSLLQVSTFKGWMDIMYA) form an intramembrane region, pore-forming. Residues 1222-1243 (AVDSREVEDQPIYEINVYMYLY) are Extracellular-facing. The chain crosses the membrane as a helical span at residues 1244–1264 (FVIFIVFGAFFTLNLFIGVII). At 1265 to 1320 (DNFNRQKQKLGGEDLFMTEEQKKYYNAMKKLGSKKAAKCIPRPSNVVQGVVYDIVT) the chain is on the cytoplasmic side. One copy of the IV repeat lies at 1304–1602 (IPRPSNVVQG…WHKFDVHGTQ (299 aa)). The chain crosses the membrane as a helical span at residues 1321–1341 (QPFTDIFIMALICINMVAMMV). Residues 1342–1352 (ESEDQSQVKKD) lie on the Extracellular side of the membrane. Residues 1353-1376 (ILSQINVIFVIIFTVECLLKLLAL) traverse the membrane as a helical segment. Residues 1377–1380 (RQYF) lie on the Cytoplasmic side of the membrane. Residues 1381–1398 (FTVGWNVFDFAVVVISII) form a helical membrane-spanning segment. The Extracellular portion of the chain corresponds to 1399–1416 (GLLLSDIIEKYFVSPTLF). Residues 1417-1437 (RVIRLARIARVLRLIRAAKGI) traverse the membrane as a helical; Voltage-sensor segment. Over 1438–1453 (RTLLFALMMSLPALFN) the chain is Cytoplasmic. The helical transmembrane segment at 1454–1474 (IGLLLFLIMFIFSIFGMSNFA) threads the bilayer. Residues 1475–1490 (YVKKQGGVDDIFNFET) are Extracellular-facing. Residues 1490 to 1505 (TFGNSMICLFEITTSA) are non-homologous region of repeat IV. The pore-forming intramembrane region spans 1491–1513 (FGNSMICLFEITTSAGWDGLLLP). The Extracellular segment spans residues 1514–1543 (TLNTGPPDCDPDVENPGTDVRGNCGNPGKG). The helical transmembrane segment at 1544–1567 (ITFFCSYIILSFLVVVNMYIAIIL) threads the bilayer. Residues 1568–1820 (ENFGVAQEES…GAIVVRESIV (253 aa)) are Cytoplasmic-facing.

Belongs to the sodium channel (TC 1.A.1.10) family.

It is found in the cell membrane. Mediates the voltage-dependent sodium ion permeability of excitable membranes. Assuming opened or closed conformations in response to the voltage difference across the membrane, the protein forms a sodium-selective channel through which Na(+) ions may pass in accordance with their electrochemical gradient. This Electrophorus electricus (Electric eel) protein is Sodium channel protein.